The primary structure comprises 578 residues: Suppressor of smlA (578 aa).

Functionally, involved in regulation of group size of aggregation streams. The polypeptide is Suppressor of smlA (sslA1) (Dictyostelium discoideum (Social amoeba)).